The primary structure comprises 329 residues: Ferredoxin--NAD(P)(+) reductase CarAd (329 aa).

The 2Fe-2S ferredoxin-type domain occupies Y2–D92. Residues C35, C40, C43, and C76 each contribute to the [2Fe-2S] cluster site. In terms of domain architecture, FAD-binding FR-type spans I100–R200.

Monomer. Carbazole 1,9a-dioxygenase complex consists of a terminal oxygenase component CarAa, a ferredoxin reductase component CarAd and a ferredoxin component CarAc. [2Fe-2S] cluster serves as cofactor. Requires FAD as cofactor.

It carries out the reaction 2 reduced [2Fe-2S]-[ferredoxin] + NAD(+) + H(+) = 2 oxidized [2Fe-2S]-[ferredoxin] + NADH. The enzyme catalyses 2 reduced [2Fe-2S]-[ferredoxin] + NADP(+) + H(+) = 2 oxidized [2Fe-2S]-[ferredoxin] + NADPH. Part of the multicomponent carbazole 1,9a-dioxygenase (CARDO), that converts carbazole (CAR) into 2-aminobiphenyl-2,3-diol. It can use both NAD and NADP as electron donors, but NAD is supposed to be the physiological electron donor. The protein is Ferredoxin--NAD(P)(+) reductase CarAd (carAd) of Metapseudomonas resinovorans (Pseudomonas resinovorans).